Consider the following 626-residue polypeptide: ATP-dependent zinc metalloprotease FtsH 3 (626 aa).

Residues 1–7 (MNKLFRS) are Cytoplasmic-facing. The chain crosses the membrane as a helical span at residues 8–28 (LAFYMLILVISVAIAVQLGGT). The Extracellular segment spans residues 29 to 103 (SQQTTQLVYS…LDFRQDNTSG (75 aa)). A helical membrane pass occupies residues 104–124 (IWAMLLQTLVPVVLVLLAFFF). The Cytoplasmic segment spans residues 125-626 (IMQQTQGSGN…GGTSQVAPAF (502 aa)). 197–204 (GPPGTGKT) provides a ligand contact to ATP. H420 provides a ligand contact to Zn(2+). Residue E421 is part of the active site. H424 and D496 together coordinate Zn(2+). Residues 602–626 (PPRPKPEPLKPRMVGGGTSQVAPAF) are disordered.

This sequence in the central section; belongs to the AAA ATPase family. In the C-terminal section; belongs to the peptidase M41 family. As to quaternary structure, homohexamer. It depends on Zn(2+) as a cofactor.

The protein localises to the cell membrane. In terms of biological role, acts as a processive, ATP-dependent zinc metallopeptidase for both cytoplasmic and membrane proteins. Plays a role in the quality control of integral membrane proteins. This Symbiobacterium thermophilum (strain DSM 24528 / JCM 14929 / IAM 14863 / T) protein is ATP-dependent zinc metalloprotease FtsH 3.